Reading from the N-terminus, the 350-residue chain is Histidinol-phosphate aminotransferase 1 (350 aa).

The residue at position 210 (Lys-210) is an N6-(pyridoxal phosphate)lysine.

The protein belongs to the class-II pyridoxal-phosphate-dependent aminotransferase family. Histidinol-phosphate aminotransferase subfamily. As to quaternary structure, homodimer. Requires pyridoxal 5'-phosphate as cofactor.

It carries out the reaction L-histidinol phosphate + 2-oxoglutarate = 3-(imidazol-4-yl)-2-oxopropyl phosphate + L-glutamate. It participates in amino-acid biosynthesis; L-histidine biosynthesis; L-histidine from 5-phospho-alpha-D-ribose 1-diphosphate: step 7/9. This is Histidinol-phosphate aminotransferase 1 from Pseudomonas fluorescens (strain ATCC BAA-477 / NRRL B-23932 / Pf-5).